Consider the following 344-residue polypeptide: MSTSTAAPAPSLSDLCPAALRRPVAAALRALDPAPARLAVAVSGGADSAMLAVAAAAVLPPGCTLRLFHVHHGLQAAADQWAAQVRGLGALLGVPVDEARVTVPPGQGLGMEAAARLARYQALAGLARQHGVRHILLAHHRNDQAETVLLRLLRGTGLQGMAAMAPLSERDGVAYLRPWLDVDRAAILALAGAVRAQCGWQAVQDPTNTDPRYARAAVRTQLAPALDARWPGWQAIVARHARQMAEAAEIVAEVARADFDTLEPADAGRSFSLAAWRGLSAARQAQALRHWLASQDAPMPTEARLAELQRQLRQLHALGHDRHLRWQHAGRVVRCERGRVWIDD.

43-48 (SGGADS) is an ATP binding site.

This sequence belongs to the tRNA(Ile)-lysidine synthase family.

It is found in the cytoplasm. The enzyme catalyses cytidine(34) in tRNA(Ile2) + L-lysine + ATP = lysidine(34) in tRNA(Ile2) + AMP + diphosphate + H(+). Ligates lysine onto the cytidine present at position 34 of the AUA codon-specific tRNA(Ile) that contains the anticodon CAU, in an ATP-dependent manner. Cytidine is converted to lysidine, thus changing the amino acid specificity of the tRNA from methionine to isoleucine. This is tRNA(Ile)-lysidine synthase from Bordetella parapertussis (strain 12822 / ATCC BAA-587 / NCTC 13253).